The following is a 160-amino-acid chain: Phosphopantetheine adenylyltransferase (160 aa).

Thr9 is a substrate binding site. ATP is bound by residues 9–10 (TF) and His17. 3 residues coordinate substrate: Lys41, Leu73, and Arg87. ATP-binding positions include 88–90 (GLR), Glu98, and 123–129 (FSYTSSS).

Belongs to the bacterial CoaD family. In terms of assembly, homohexamer. Mg(2+) is required as a cofactor.

Its subcellular location is the cytoplasm. The enzyme catalyses (R)-4'-phosphopantetheine + ATP + H(+) = 3'-dephospho-CoA + diphosphate. It participates in cofactor biosynthesis; coenzyme A biosynthesis; CoA from (R)-pantothenate: step 4/5. Functionally, reversibly transfers an adenylyl group from ATP to 4'-phosphopantetheine, yielding dephospho-CoA (dPCoA) and pyrophosphate. This is Phosphopantetheine adenylyltransferase from Opitutus terrae (strain DSM 11246 / JCM 15787 / PB90-1).